The sequence spans 179 residues: NADH dehydrogenase [ubiquinone] 1 beta subcomplex subunit 9 (179 aa).

At Ala-2 the chain carries N-acetylalanine. Residue Ser-85 is modified to Phosphoserine.

The protein belongs to the complex I LYR family. As to quaternary structure, mammalian complex I is composed of 45 different subunits.

It is found in the mitochondrion inner membrane. Its function is as follows. Accessory subunit of the mitochondrial membrane respiratory chain NADH dehydrogenase (Complex I), that is believed to be not involved in catalysis. Complex I functions in the transfer of electrons from NADH to the respiratory chain. The immediate electron acceptor for the enzyme is believed to be ubiquinone. This Mus musculus (Mouse) protein is NADH dehydrogenase [ubiquinone] 1 beta subcomplex subunit 9 (Ndufb9).